Reading from the N-terminus, the 203-residue chain is Meiotically up-regulated protein PB17E12.09 (203 aa).

A coiled-coil region spans residues 92 to 177 (CNRKIEGYIK…KEMQLYMTKI (86 aa)).

The protein localises to the cytoplasm. In terms of biological role, has a role in meiosis and sporulation. The chain is Meiotically up-regulated protein PB17E12.09 from Schizosaccharomyces pombe (strain 972 / ATCC 24843) (Fission yeast).